We begin with the raw amino-acid sequence, 310 residues long: MQPPGEDAPAGCPFSGARAAHSAPAAPAAHEASHVPGDAGWHNAQLDFSKSMSYGDYLSLNSILDAQHPLSPDHNEMLFIIQHQTSELWMKLALFELRGALDAVRTDALPPAFKMLARVSRILEQLVQAWSVLSTMTPSEYSAMRPYLGQSSGFQSYQYRQLEFLLGNKNVQMLQPHAHRPDILEQVRATLEAPSFYDEVVRLLARRGFPIAAERLERDWTQPTRHDETVEAAWLEVYRHPQQHWELYEMAEELVDLEDAFRQWRFRHVTTVERIIGFKQGTGGTSGAPYLRKMLDVVLFPELWHVRTTL.

A disordered region spans residues 1-36; sequence MQPPGEDAPAGCPFSGARAAHSAPAAPAAHEASHVP. Residues 15-36 show a composition bias toward low complexity; the sequence is SGARAAHSAPAAPAAHEASHVP. Residues 79–83, Tyr-141, and Arg-145 contribute to the substrate site; that span reads FIIQH. His-268 serves as a coordination point for heme. Position 282 (Thr-282) interacts with substrate.

This sequence belongs to the tryptophan 2,3-dioxygenase family. In terms of assembly, homotetramer. Heme serves as cofactor.

It catalyses the reaction L-tryptophan + O2 = N-formyl-L-kynurenine. The protein operates within amino-acid degradation; L-tryptophan degradation via kynurenine pathway; L-kynurenine from L-tryptophan: step 1/2. In terms of biological role, heme-dependent dioxygenase that catalyzes the oxidative cleavage of the L-tryptophan (L-Trp) pyrrole ring and converts L-tryptophan to N-formyl-L-kynurenine. Catalyzes the oxidative cleavage of the indole moiety. The chain is Tryptophan 2,3-dioxygenase from Burkholderia lata (strain ATCC 17760 / DSM 23089 / LMG 22485 / NCIMB 9086 / R18194 / 383).